The following is a 399-amino-acid chain: Oligoribonuclease NrnB (399 aa).

The cofactor is Mn(2+). Requires Co(2+) as cofactor. Mg(2+) serves as cofactor.

It is found in the cytoplasm. Degrades RNA oligonucleotides with a length of 5 nucleotides in a 3'- to 5'-direction. Less active on shorter RNA oligonucleotides and on those with a length of 24 nucleotides. Prefers RNA oligonucleotides containing adenines rather than cytosines. This is Oligoribonuclease NrnB (nrnB) from Bacillus subtilis (strain 168).